A 230-amino-acid polypeptide reads, in one-letter code: Urease accessory protein UreF (230 aa).

The protein belongs to the UreF family. As to quaternary structure, ureD, UreF and UreG form a complex that acts as a GTP-hydrolysis-dependent molecular chaperone, activating the urease apoprotein by helping to assemble the nickel containing metallocenter of UreC. The UreE protein probably delivers the nickel.

The protein localises to the cytoplasm. In terms of biological role, required for maturation of urease via the functional incorporation of the urease nickel metallocenter. This is Urease accessory protein UreF from Cupriavidus pinatubonensis (strain JMP 134 / LMG 1197) (Cupriavidus necator (strain JMP 134)).